The following is a 444-amino-acid chain: UDP-N-acetylmuramate--L-alanine ligase (444 aa).

110–116 (GAHGKTS) lines the ATP pocket.

The protein belongs to the MurCDEF family.

Its subcellular location is the cytoplasm. The enzyme catalyses UDP-N-acetyl-alpha-D-muramate + L-alanine + ATP = UDP-N-acetyl-alpha-D-muramoyl-L-alanine + ADP + phosphate + H(+). It functions in the pathway cell wall biogenesis; peptidoglycan biosynthesis. Functionally, cell wall formation. The sequence is that of UDP-N-acetylmuramate--L-alanine ligase from Streptococcus pneumoniae (strain ATCC 700669 / Spain 23F-1).